We begin with the raw amino-acid sequence, 658 residues long: Probable methyl-accepting chemotaxis protein BT9727_0469 (658 aa).

The Cytoplasmic segment spans residues 1–14 (MLQGKLRRSSLKAK). The chain crosses the membrane as a helical span at residues 15 to 35 (LLVSFVIVLILPSIVIGWTSY). Residues 36 to 283 (QQAKTNFNET…ANPIFYKTLT (248 aa)) are Extracellular-facing. Residues 44 to 109 (ETILQSAEDN…NKLHPEIEAI (66 aa)) adopt a coiled-coil conformation. Residues 150–221 (ITAPYKSSTT…AHPTMKPGDK (72 aa)) enclose the Cache domain. A helical transmembrane segment spans residues 284–304 (VIGISLIIGGVLIYFIIASII). The HAMP domain maps to 301–353 (ASIISPLKQLVISSKKISEGDLTETITVHSKDEIGQLGESFNEMAASLHHVIS). Residues 305–658 (SPLKQLVISS…LQEMIGKFKV (354 aa)) are Cytoplasmic-facing. Glutamate methyl ester (Glu) is present on Glu-368. Positions 372-622 (SMKQTSEATE…ENAASVQNIA (251 aa)) constitute a Methyl-accepting transducer domain. Gln-592 carries the post-translational modification Deamidated glutamine. Residue Gln-592 is modified to Glutamate methyl ester (Gln). 2 positions are modified to glutamate methyl ester (Glu): Glu-627 and Glu-634.

Belongs to the methyl-accepting chemotaxis (MCP) protein family.

It localises to the cell membrane. Its function is as follows. Chemotactic-signal transducers respond to changes in the concentration of attractants and repellents in the environment, transduce a signal from the outside to the inside of the cell, and facilitate sensory adaptation through the variation of the level of methylation. This is Probable methyl-accepting chemotaxis protein BT9727_0469 from Bacillus thuringiensis subsp. konkukian (strain 97-27).